Consider the following 481-residue polypeptide: Deoxyribodipyrimidine photo-lyase (481 aa).

In terms of domain architecture, Photolyase/cryptochrome alpha/beta spans 1–136 (MQLFWHRRDL…AHAQFHDAVH (136 aa)). An FAD-binding site is contributed by Tyr-228. Arg-232 contacts DNA. 240 to 244 (TSRLS) is a binding site for FAD. Interaction with DNA stretches follow at residues 283-290 (QLAWREFY) and 349-350 (NR). 380 to 382 (DHD) provides a ligand contact to FAD. Position 412 (Gln-412) interacts with DNA.

Belongs to the DNA photolyase class-1 family. As to quaternary structure, monomer. FAD serves as cofactor. The cofactor is coenzyme F420-(gamma-Glu)n.

The enzyme catalyses cyclobutadipyrimidine (in DNA) = 2 pyrimidine residues (in DNA).. Involved in repair of UV radiation-induced DNA damage. Catalyzes the light-dependent monomerization (300-600 nm) of cyclobutyl pyrimidine dimers (in cis-syn configuration), which are formed between adjacent bases on the same DNA strand upon exposure to ultraviolet radiation. The polypeptide is Deoxyribodipyrimidine photo-lyase (phr) (Halobacterium salinarum (strain ATCC 700922 / JCM 11081 / NRC-1) (Halobacterium halobium)).